We begin with the raw amino-acid sequence, 367 residues long: CST complex subunit STN1 (367 aa).

Residues 56 to 154 (VEILGTVIGR…EIRVTTYYKV (99 aa)) constitute a DNA-binding region (OB). 2 winged helix-turn-helix (wHTH) regions span residues 190–294 (RAFS…YVTR) and 295–367 (EDKE…YTAF).

The protein belongs to the STN1 family. As to quaternary structure, component of the CST complex, composed of TEN1, CTC1 and STN1. Interacts with TEN1 and CTC1; the interaction is direct. Interacts with ACD/TPP1.

It localises to the nucleus. The protein resides in the chromosome. The protein localises to the telomere. Component of the CST complex, a complex that binds to single-stranded DNA and is required to protect telomeres from DNA degradation. The CST complex binds single-stranded DNA with high affinity in a sequence-independent manner, while isolated subunits bind DNA with low affinity by themselves. In addition to telomere protection, the CST complex has probably a more general role in DNA metabolism at non-telomeric sites. The sequence is that of CST complex subunit STN1 from Ailuropoda melanoleuca (Giant panda).